Here is a 429-residue protein sequence, read N- to C-terminus: Adenylosuccinate synthetase (429 aa).

Residues 12 to 18 (GDEGKGK) and 40 to 42 (GHT) contribute to the GTP site. D13 acts as the Proton acceptor in catalysis. Positions 13 and 40 each coordinate Mg(2+). IMP contacts are provided by residues 13-16 (DEGK), 38-41 (NAGH), T129, R143, Q223, T238, and R302. The active-site Proton donor is the H41. Position 298-304 (298-304 (TVTGRRR)) interacts with substrate. GTP-binding positions include R304, 330–332 (KLD), and 412–414 (STS).

This sequence belongs to the adenylosuccinate synthetase family. Homodimer. It depends on Mg(2+) as a cofactor.

The protein resides in the cytoplasm. It carries out the reaction IMP + L-aspartate + GTP = N(6)-(1,2-dicarboxyethyl)-AMP + GDP + phosphate + 2 H(+). The protein operates within purine metabolism; AMP biosynthesis via de novo pathway; AMP from IMP: step 1/2. Functionally, plays an important role in the de novo pathway of purine nucleotide biosynthesis. Catalyzes the first committed step in the biosynthesis of AMP from IMP. In Granulibacter bethesdensis (strain ATCC BAA-1260 / CGDNIH1), this protein is Adenylosuccinate synthetase.